The chain runs to 217 residues: MSFRGGGRGGFNRGGGGGGFNRGGSSNHFRGGGGGGGGGNFRGGGRGGFGRGGGRGGFNKGQDQGPPERVVLLGEFLHPCEDDIVCKCTTDENKVPYFNAPVYLENKEQIGKVDEIFGQLRDFYFSVKLSENMKASSFKKLQKFYIDPYKLLPLQRFLPRPPGEKGPPRGGGRGGRGGGRGGGGRGGGRGGGFRGGRGGGGGGFRGGRGGGFRGRGH.

Composition is skewed to gly residues over residues 1-22 (MSFRGGGRGGFNRGGGGGGFNR) and 30-59 (RGGGGGGGGGNFRGGGRGGFGRGGGRGGFN). The disordered stretch occupies residues 1-65 (MSFRGGGRGG…GGFNKGQDQG (65 aa)). Residues 4 to 57 (RGGGRGGFNRGGGGGGFNRGGSSNHFRGGGGGGGGGNFRGGGRGGFGRGGGRGG) are RGG-box 1. Lys-134 participates in a covalent cross-link: Glycyl lysine isopeptide (Lys-Gly) (interchain with G-Cter in SUMO2). Residues 156-217 (RFLPRPPGEK…RGGGFRGRGH (62 aa)) are disordered. Over residues 168–217 (PRGGGRGGRGGGRGGGGRGGGRGGGFRGGRGGGGGGFRGGRGGGFRGRGH) the composition is skewed to gly residues. Positions 169 to 217 (RGGGRGGRGGGRGGGGRGGGRGGGFRGGRGGGGGGFRGGRGGGFRGRGH) are RGG-box 2.

The protein belongs to the GAR1 family. Part of the H/ACA small nucleolar ribonucleoprotein (H/ACA snoRNP) complex, which contains NHP2/NOLA2, GAR1/NOLA1, NOP10/NOLA3, and DKC1/NOLA4, which is presumed to be the catalytic subunit. The complex contains a stable core formed by binding of one or two NOP10-DKC1 heterodimers to NHP2; GAR1 subsequently binds to this core via DKC1. The complex binds a box H/ACA small nucleolar RNA (snoRNA), which may target the specific site of modification within the RNA substrate. The complex also interacts with TERC, which contains a 3'-terminal domain related to the box H/ACA snoRNAs. Specific interactions with snoRNAs or TERC are mediated by GAR1 and NHP2. Associates with NOLC1/NOPP140. H/ACA snoRNPs interact with the SMN complex, consisting of SMN1 or SMN2, GEMIN2/SIP1, DDX20/GEMIN3, and GEMIN4. This is mediated by interaction between GAR1 and SMN1 or SMN2. The SMN complex may be required for correct assembly of the H/ACA snoRNP complex. Component of the telomerase holoenzyme complex composed of one molecule of TERT, one molecule of WRAP53/TCAB1, two molecules of H/ACA ribonucleoprotein complex subunits DKC1, NOP10, NHP2 and GAR1, and a telomerase RNA template component (TERC). The telomerase holoenzyme complex is associated with TEP1, SMG6/EST1A and POT1.

The protein resides in the nucleus. It localises to the nucleolus. Its subcellular location is the cajal body. In terms of biological role, required for ribosome biogenesis and telomere maintenance. Part of the H/ACA small nucleolar ribonucleoprotein (H/ACA snoRNP) complex, which catalyzes pseudouridylation of rRNA. This involves the isomerization of uridine such that the ribose is subsequently attached to C5, instead of the normal N1. Each rRNA can contain up to 100 pseudouridine ('psi') residues, which may serve to stabilize the conformation of rRNAs. May also be required for correct processing or intranuclear trafficking of TERC, the RNA component of the telomerase reverse transcriptase (TERT) holoenzyme. This chain is H/ACA ribonucleoprotein complex subunit 1 (GAR1), found in Homo sapiens (Human).